A 2097-amino-acid polypeptide reads, in one-letter code: 1-phosphatidylinositol 3-phosphate 5-kinase (2097 aa).

Residues Met-1 to Ser-44 form a disordered region. Ala-2 is subject to N-acetylalanine. Phosphoserine; by autocatalysis is present on residues Ser-23 and Ser-48. The tract at residues Asn-56–Pro-122 is disordered. The span at Glu-66–Ser-81 shows a compositional bias: low complexity. A Phosphoserine modification is found at Ser-88. The FYVE-type zinc-finger motif lies at Asp-158–Leu-218. Zn(2+)-binding residues include Cys-164, Cys-167, Cys-180, Cys-183, Cys-188, Cys-191, Cys-210, and Cys-213. Residues Ser-299, Ser-307, and Ser-312 each carry the phosphoserine modification. Ser-318 bears the Phosphoserine; by PKB/AKT1 or PKB/AKT2 mark. At Ser-329 the chain carries Phosphoserine. In terms of domain architecture, DEP spans His-365–Gln-440. Residues Thr-442–Glu-459 show a composition bias toward polar residues. A disordered region spans residues Thr-442–Asp-469. The span at Gly-460 to Asp-469 shows a compositional bias: basic and acidic residues. Residue Ser-475 is modified to Phosphoserine. The interval Gly-484–Ser-505 is disordered. Residues Leu-488–Ser-505 show a composition bias toward polar residues. The tract at residues Met-616–Leu-868 is chaperonin-like domain. Disordered stretches follow at residues Gly-895–Thr-928, Ala-989–Thr-1022, His-1171–Gly-1194, and Phe-1511–Glu-1555. Residues Ser-902–Pro-912 are compositionally biased toward polar residues. The span at Ala-1175–Gly-1184 shows a compositional bias: polar residues. Positions Asn-1185–Gly-1194 are enriched in basic and acidic residues. 2 positions are modified to phosphoserine: Ser-1543 and Ser-1548. At Ser-1668 the chain carries Phosphoserine; by autocatalysis. The disordered stretch occupies residues Glu-1697 to Met-1742. Ser-1753 bears the Phosphoserine mark. A PIPK domain is found at Ser-1757–Phe-2083. The disordered stretch occupies residues Gly-1781–Lys-1800. Residues Glu-1841 to Cys-2097 form a catalytic region. Phosphoserine; by autocatalysis is present on residues Ser-1968 and Ser-2052.

Component of the PI(3,5)P2 regulatory complex/PAS complex, at least composed of PIKFYVE, FIG4 and VAC14. VAC14 nucleates the assembly of the complex and serves as a scaffold by pentamerizing into a star-shaped structure, which can bind a single copy each of PIKFYVE and FIG4 and coordinates their activities. Interacts (via chaperonin-like domain) with RABEPK; the interaction recruits RABEPK to the endosomal membrane. Interacts with SPAG9. Interacts with EGFR. Mn(2+) serves as cofactor. In terms of processing, phosphorylated in response to insulin at Ser-318 in a protein kinase B (PKB)-dependent manner. Autophosphorylates which down-regulates lipid product formation. Post-translationally, autophosphorylates which inhibits its own phosphatidylinositol 3-phosphate 5-kinase activity, stimulates FIG4 lipid phosphatase activity and down-regulates lipid product formation. Dephosphorylated by FIG4 in the PI(3,5)P2 regulatory complex, at Ser-48, Ser-1668 and Ser-2052. Phosphorylated in response to insulin at Ser-318 in a protein kinase B (PKB)-dependent manner. Ubiquitous.

The protein resides in the endosome membrane. The protein localises to the early endosome membrane. It is found in the cytoplasmic vesicle. It localises to the phagosome membrane. Its subcellular location is the late endosome membrane. The catalysed reaction is a 1,2-diacyl-sn-glycero-3-phospho-(1D-myo-inositol-3-phosphate) + ATP = a 1,2-diacyl-sn-glycero-3-phospho-(1D-myo-inositol-3,5-bisphosphate) + ADP + H(+). It catalyses the reaction a 1,2-diacyl-sn-glycero-3-phospho-(1D-myo-inositol) + ATP = a 1,2-diacyl-sn-glycero-3-phospho-(1D-myo-inositol-5-phosphate) + ADP + H(+). It carries out the reaction L-seryl-[protein] + ATP = O-phospho-L-seryl-[protein] + ADP + H(+). Inhibited by apilimod and YM201636. Dual specificity kinase implicated in myriad essential cellular processes such as maintenance of endomembrane homeostasis, and endocytic-vacuolar pathway, lysosomal trafficking, nuclear transport, stress- or hormone-induced signaling and cell cycle progression. The PI(3,5)P2 regulatory complex regulates both the synthesis and turnover of phosphatidylinositol 3,5-bisphosphate (PtdIns(3,5)P2). Sole enzyme to catalyze the phosphorylation of phosphatidylinositol 3-phosphate on the fifth hydroxyl of the myo-inositol ring, to form (PtdIns(3,5)P2). Also catalyzes the phosphorylation of phosphatidylinositol on the fifth hydroxyl of the myo-inositol ring, to form phosphatidylinositol 5-phosphate (PtdIns(5)P). Has serine-protein kinase activity and is able to autophosphorylate and transphosphorylate. Autophosphorylation inhibits its own phosphatidylinositol 3-phosphate 5-kinase activity, stimulates FIG4 lipid phosphatase activity and down-regulates lipid product formation. Involved in key endosome operations such as fission and fusion in the course of endosomal cargo transport. Required for the maturation of early into late endosomes, phagosomes and lysosomes. Regulates vacuole maturation and nutrient recovery following engulfment of macromolecules, initiates the redistribution of accumulated lysosomal contents back into the endosome network. Critical regulator of the morphology, degradative activity, and protein turnover of the endolysosomal system in macrophages and platelets. In neutrophils, critical to perform chemotaxis, generate ROS, and undertake phagosome fusion with lysosomes. Plays a key role in the processing and presentation of antigens by major histocompatibility complex class II (MHC class II) mediated by CTSS. Regulates melanosome biogenesis by controlling the delivery of proteins from the endosomal compartment to the melanosome. Essential for systemic glucose homeostasis, mediates insulin-induced signals for endosome/actin remodeling in the course of GLUT4 translocation/glucose uptake activation. Supports microtubule-based endosome-to-trans-Golgi network cargo transport, trhough association with SPAG9 and RABEPK. Mediates EGFR trafficking to the nucleus. This is 1-phosphatidylinositol 3-phosphate 5-kinase from Mus musculus (Mouse).